A 181-amino-acid chain; its full sequence is MSFKPIDPKRDEIRRYLERGSVLDSLTKLFIRVIKERPENPMDYIRNHIGVVRHQHDKYERLQQDLQLANEEIQRLRAIINGINPDVLQGHQPVASSEVVVATEAPQTVAESTEAAEQQQQQQQQENGETELEKPNESSADVAEITAAVEACQIEGNSVVTTDEAAQPSPTVQAEASGSSE.

The span at 111–127 (ESTEAAEQQQQQQQQEN) shows a compositional bias: low complexity. Disordered stretches follow at residues 111–145 (ESTE…VAEI) and 159–181 (VVTT…GSSE). Residues 168 to 181 (PSPTVQAEASGSSE) show a composition bias toward polar residues.

Belongs to the AMY1 family.

The protein localises to the nucleus. The polypeptide is c-Myc-binding protein homolog (Drosophila melanogaster (Fruit fly)).